A 250-amino-acid polypeptide reads, in one-letter code: Ubiquinone/menaquinone biosynthesis C-methyltransferase UbiE (250 aa).

S-adenosyl-L-methionine-binding positions include T74, D94, D122 to A123, and S139.

The protein belongs to the class I-like SAM-binding methyltransferase superfamily. MenG/UbiE family.

It catalyses the reaction a 2-demethylmenaquinol + S-adenosyl-L-methionine = a menaquinol + S-adenosyl-L-homocysteine + H(+). The enzyme catalyses a 2-methoxy-6-(all-trans-polyprenyl)benzene-1,4-diol + S-adenosyl-L-methionine = a 5-methoxy-2-methyl-3-(all-trans-polyprenyl)benzene-1,4-diol + S-adenosyl-L-homocysteine + H(+). The protein operates within quinol/quinone metabolism; menaquinone biosynthesis; menaquinol from 1,4-dihydroxy-2-naphthoate: step 2/2. It functions in the pathway cofactor biosynthesis; ubiquinone biosynthesis. Its function is as follows. Methyltransferase required for the conversion of demethylmenaquinol (DMKH2) to menaquinol (MKH2) and the conversion of 2-polyprenyl-6-methoxy-1,4-benzoquinol (DDMQH2) to 2-polyprenyl-3-methyl-6-methoxy-1,4-benzoquinol (DMQH2). The polypeptide is Ubiquinone/menaquinone biosynthesis C-methyltransferase UbiE (Paracoccus denitrificans (strain Pd 1222)).